A 603-amino-acid polypeptide reads, in one-letter code: Trihelix transcription factor DF1 (603 aa).

A Myb-like 1 domain is found at 60–118 (NRWPRQETLALLKIRSDMGIAFRDASVKGPLWEEVSRKMAEHGYIRNAKKCKEKFENVY). 4 disordered regions span residues 149–201 (QSTT…SSIP), 220–249 (LSDN…TRKK), 333–408 (KQPN…SSSR), and 532–603 (QWPP…TNNL). 4 stretches are compositionally biased toward low complexity: residues 168–178 (NNNNNNNNNNN), 189–198 (TTVMPTLPSS), 221–236 (SDNS…TSSD), and 344–362 (PQQV…QQPP). Residues 363–376 (QRSPPPQPPAPLPQ) are compositionally biased toward pro residues. Polar residues predominate over residues 381 to 408 (VVSTLDTTKTDNGGDQNMTPAASASSSR). The Myb-like 2 domain occupies 401-465 (AASASSSRWP…RCKEKWENIN (65 aa)). Positions 532 to 555 (QWPPAVTTATTTPAAAQPDQQSQP) are enriched in low complexity. The segment covering 559–586 (NFDDEEGTDEEYDDEDEEEENEEEEGGE) has biased composition (acidic residues). Residues 593-603 (NNNNNKTTNNL) show a composition bias toward low complexity.

It is found in the nucleus. Transcription repressor that negatively regulates root hair growth by directly binding RSL4 promoter and repressing RSL4 expression. Required for the synthesis of seed coat mucilage. The polypeptide is Trihelix transcription factor DF1 (Arabidopsis thaliana (Mouse-ear cress)).